The following is an 804-amino-acid chain: Leucine--tRNA ligase (804 aa).

Residues 39–50 carry the 'HIGH' region motif; sequence PFPSGKGLHVGH. A 'KMSKS' region motif is present at residues 573–577; that stretch reads KMSKS. Lysine 576 is a binding site for ATP.

Belongs to the class-I aminoacyl-tRNA synthetase family.

The protein resides in the cytoplasm. It catalyses the reaction tRNA(Leu) + L-leucine + ATP = L-leucyl-tRNA(Leu) + AMP + diphosphate. This chain is Leucine--tRNA ligase, found in Lactobacillus acidophilus (strain ATCC 700396 / NCK56 / N2 / NCFM).